A 293-amino-acid chain; its full sequence is CDP-abequose synthase (293 aa).

Threonine 113 contacts substrate. The active-site Proton acceptor is tyrosine 130.

Belongs to the NAD(P)-dependent epimerase/dehydratase family.

The catalysed reaction is CDP-alpha-D-abequose + NADP(+) = CDP-4-dehydro-3,6-dideoxy-alpha-D-glucose + NADPH + H(+). It participates in bacterial outer membrane biogenesis; LPS O-antigen biosynthesis. The polypeptide is CDP-abequose synthase (Salmonella muenchen).